Consider the following 264-residue polypeptide: uncharacterized protein (264 aa).

The next 4 membrane-spanning stretches (helical) occupy residues 43–63 (VVAA…LYLI), 68–88 (FLPS…LLGI), 96–116 (ILPA…LGCI), and 150–170 (LAAK…VLAV). Positions 216–247 (SYEDALKNSSQQPSTSSSSSSPPSRPPHSVYT) are disordered. Residues 224–237 (SSQQPSTSSSSSSP) show a composition bias toward low complexity.

It localises to the membrane. This is an uncharacterized protein from Caenorhabditis elegans.